A 91-amino-acid chain; its full sequence is ATP synthase subunit c (91 aa).

A run of 2 helical transmembrane segments spans residues 4-24 and 53-73; these read FTMC…GTGI and IGLA…LIIL.

It belongs to the ATPase C chain family. F-type ATPases have 2 components, F(1) - the catalytic core - and F(0) - the membrane proton channel. F(1) has five subunits: alpha(3), beta(3), gamma(1), delta(1), epsilon(1). F(0) has three main subunits: a(1), b(2) and c(10-14). The alpha and beta chains form an alternating ring which encloses part of the gamma chain. F(1) is attached to F(0) by a central stalk formed by the gamma and epsilon chains, while a peripheral stalk is formed by the delta and b chains.

The protein resides in the cell inner membrane. In terms of biological role, f(1)F(0) ATP synthase produces ATP from ADP in the presence of a proton or sodium gradient. F-type ATPases consist of two structural domains, F(1) containing the extramembraneous catalytic core and F(0) containing the membrane proton channel, linked together by a central stalk and a peripheral stalk. During catalysis, ATP synthesis in the catalytic domain of F(1) is coupled via a rotary mechanism of the central stalk subunits to proton translocation. Its function is as follows. Key component of the F(0) channel; it plays a direct role in translocation across the membrane. A homomeric c-ring of between 10-14 subunits forms the central stalk rotor element with the F(1) delta and epsilon subunits. The sequence is that of ATP synthase subunit c from Geotalea daltonii (strain DSM 22248 / JCM 15807 / FRC-32) (Geobacter daltonii).